Reading from the N-terminus, the 584-residue chain is ATP-dependent lipid A-core flippase 2 (584 aa).

Transmembrane regions (helical) follow at residues Ile-32–Phe-52, Thr-68–Phe-88, Ser-146–Val-166, Tyr-167–Ile-187, Ala-254–Leu-274, and Val-280–Leu-300. One can recognise an ABC transmembrane type-1 domain in the interval Phe-33 to Lys-315. Positions Ile-347–Ser-583 constitute an ABC transporter domain. ATP is bound at residue Gly-381–Ser-388.

The protein belongs to the ABC transporter superfamily. Lipid exporter (TC 3.A.1.106) family. In terms of assembly, homodimer.

Its subcellular location is the cell inner membrane. The catalysed reaction is ATP + H2O + lipid A-core oligosaccharideSide 1 = ADP + phosphate + lipid A-core oligosaccharideSide 2.. Its function is as follows. Involved in lipopolysaccharide (LPS) biosynthesis. Translocates lipid A-core from the inner to the outer leaflet of the inner membrane. Transmembrane domains (TMD) form a pore in the inner membrane and the ATP-binding domain (NBD) is responsible for energy generation. The sequence is that of ATP-dependent lipid A-core flippase 2 from Colwellia psychrerythraea (strain 34H / ATCC BAA-681) (Vibrio psychroerythus).